Reading from the N-terminus, the 184-residue chain is uncharacterized protein (184 aa).

This sequence belongs to the eIF-2B alpha/beta/delta subunits family.

This is an uncharacterized protein from Rhodospirillum rubrum.